A 396-amino-acid polypeptide reads, in one-letter code: Probable peptidoglycan glycosyltransferase FtsW (396 aa).

At Met-1–Ala-27 the chain is on the cytoplasmic side. A helical membrane pass occupies residues Leu-28–Ile-48. Topologically, residues Pro-49 to Arg-64 are periplasmic. The chain crosses the membrane as a helical span at residues Asp-65–Glu-85. Topologically, residues Lys-86 to Arg-93 are cytoplasmic. Residues Leu-94–Val-114 traverse the membrane as a helical segment. The Periplasmic segment spans residues Asn-115–Pro-122. The helical transmembrane segment at Met-123–Ala-143 threads the bilayer. The Cytoplasmic segment spans residues Ser-144–Lys-157. The chain crosses the membrane as a helical span at residues Leu-158 to Pro-178. The Periplasmic segment spans residues Asp-179–Thr-183. Transmembrane regions (helical) follow at residues Val-184–Phe-204 and Val-205–Arg-225. At Leu-226–Val-285 the chain is on the periplasmic side. Residues Gly-286–Phe-306 traverse the membrane as a helical segment. Residues Arg-307–Lys-323 are Cytoplasmic-facing. A helical transmembrane segment spans residues Gly-324–Met-344. The Periplasmic portion of the chain corresponds to Ser-345 to Thr-355. A helical transmembrane segment spans residues Phe-356 to Leu-376. Topologically, residues Leu-377 to Asp-396 are cytoplasmic.

It belongs to the SEDS family. FtsW subfamily.

It is found in the cell inner membrane. It catalyses the reaction [GlcNAc-(1-&gt;4)-Mur2Ac(oyl-L-Ala-gamma-D-Glu-L-Lys-D-Ala-D-Ala)](n)-di-trans,octa-cis-undecaprenyl diphosphate + beta-D-GlcNAc-(1-&gt;4)-Mur2Ac(oyl-L-Ala-gamma-D-Glu-L-Lys-D-Ala-D-Ala)-di-trans,octa-cis-undecaprenyl diphosphate = [GlcNAc-(1-&gt;4)-Mur2Ac(oyl-L-Ala-gamma-D-Glu-L-Lys-D-Ala-D-Ala)](n+1)-di-trans,octa-cis-undecaprenyl diphosphate + di-trans,octa-cis-undecaprenyl diphosphate + H(+). It participates in cell wall biogenesis; peptidoglycan biosynthesis. Peptidoglycan polymerase that is essential for cell division. The polypeptide is Probable peptidoglycan glycosyltransferase FtsW (Pasteurella multocida (strain Pm70)).